The chain runs to 641 residues: SUMO-activating enzyme subunit 2 (641 aa).

Residues 24 to 29 (GAGGIG), aspartate 48, 56 to 59 (NLNR), lysine 72, 95 to 96 (SI), and 117 to 122 (DNNAAR) each bind ATP. Residues cysteine 158 and cysteine 161 each coordinate Zn(2+). Cysteine 173 (glycyl thioester intermediate) is an active-site residue. Residue lysine 190 forms a Glycyl lysine isopeptide (Lys-Gly) (interchain with G-Cter in SUMO) linkage. A Glycyl lysine isopeptide (Lys-Gly) (interchain with G-Cter in SUMO1) cross-link involves residue lysine 236. Residues lysine 257 and lysine 275 each participate in a glycyl lysine isopeptide (Lys-Gly) (interchain with G-Cter in SUMO) cross-link. Positions 439 and 442 each coordinate Zn(2+). Residues 546–641 (GDVPEKGPQK…EEDDDIIALD (96 aa)) form a disordered region. Positions 556–579 (PSEQSVKNITNGSDDGAQPSTSKA) are enriched in polar residues. Over residues 582 to 594 (QDDVLIVDSDEES) the composition is skewed to acidic residues. Residues lysine 610, lysine 612, and lysine 623 each participate in a glycyl lysine isopeptide (Lys-Gly) (interchain with G-Cter in SUMO) cross-link. Acidic residues predominate over residues 630–641 (PVEEDDDIIALD).

The protein belongs to the ubiquitin-activating E1 family. As to quaternary structure, heterodimer of sae1 and uba2/sae2. The heterodimer corresponds to the two domains that are encoded on a single polypeptide chain in ubiquitin-activating enzyme E1. Interacts with ube2i. Post-translationally, sumoylated with SUMO1 and SUMO2/3 and by UBC9. Sumoylation at Lys-236 inhibits enzymatic activity. Sumoylation at the C-terminal lysine cluster plays an essential role in nuclear trafficking.

The protein resides in the cytoplasm. Its subcellular location is the nucleus. It participates in protein modification; protein sumoylation. Its function is as follows. The heterodimer acts as an E1 ligase for sumo1, sumo2, and sumo3. It mediates ATP-dependent activation of sumo proteins followed by formation of a thioester bond between a sumo protein and a conserved active site cysteine residue on uba2/sae2. The sequence is that of SUMO-activating enzyme subunit 2 (uba2) from Xenopus tropicalis (Western clawed frog).